A 315-amino-acid polypeptide reads, in one-letter code: 4-diphosphocytidyl-2-C-methyl-D-erythritol kinase (315 aa).

Residue lysine 11 is part of the active site. 99 to 109 (PMAAGLAGGSA) provides a ligand contact to ATP. The active site involves aspartate 141.

The protein belongs to the GHMP kinase family. IspE subfamily.

It catalyses the reaction 4-CDP-2-C-methyl-D-erythritol + ATP = 4-CDP-2-C-methyl-D-erythritol 2-phosphate + ADP + H(+). It functions in the pathway isoprenoid biosynthesis; isopentenyl diphosphate biosynthesis via DXP pathway; isopentenyl diphosphate from 1-deoxy-D-xylulose 5-phosphate: step 3/6. Its function is as follows. Catalyzes the phosphorylation of the position 2 hydroxy group of 4-diphosphocytidyl-2C-methyl-D-erythritol. This Synechocystis sp. (strain ATCC 27184 / PCC 6803 / Kazusa) protein is 4-diphosphocytidyl-2-C-methyl-D-erythritol kinase.